The primary structure comprises 155 residues: Small ribosomal subunit protein uS7 (155 aa).

It belongs to the universal ribosomal protein uS7 family. As to quaternary structure, part of the 30S ribosomal subunit. Contacts proteins S9 and S11.

In terms of biological role, one of the primary rRNA binding proteins, it binds directly to 16S rRNA where it nucleates assembly of the head domain of the 30S subunit. Is located at the subunit interface close to the decoding center, probably blocks exit of the E-site tRNA. The chain is Small ribosomal subunit protein uS7 from Chlorobium chlorochromatii (strain CaD3).